The following is a 1064-amino-acid chain: Error-prone DNA polymerase (1064 aa).

The protein belongs to the DNA polymerase type-C family. DnaE2 subfamily.

The protein resides in the cytoplasm. It carries out the reaction DNA(n) + a 2'-deoxyribonucleoside 5'-triphosphate = DNA(n+1) + diphosphate. Its function is as follows. DNA polymerase involved in damage-induced mutagenesis and translesion synthesis (TLS). It is not the major replicative DNA polymerase. The sequence is that of Error-prone DNA polymerase from Azoarcus sp. (strain BH72).